We begin with the raw amino-acid sequence, 414 residues long: tRNA N6-adenosine threonylcarbamoyltransferase, mitochondrial (414 aa).

Residues 1-29 (MLILTKTAGVFFKPSKRKVYEFLRSFNFH) constitute a mitochondrion transit peptide. N6-acetyllysine is present on residues lysine 74 and lysine 140. Residues histidine 147 and histidine 151 each coordinate a divalent metal cation. Substrate is bound by residues 169–173 (LISGG) and aspartate 202. Lysine 203 bears the N6-acetyllysine mark. Substrate-binding residues include glycine 222 and glutamate 226. N6-acetyllysine occurs at positions 230, 240, and 299. Substrate is bound by residues 329-330 (SN) and threonine 357. Residue aspartate 358 coordinates a divalent metal cation.

It belongs to the KAE1 / TsaD family. In terms of assembly, monomer. A divalent metal cation is required as a cofactor. In terms of tissue distribution, widely expressed, with maximum expression in pituitary gland, prostate, rectum and uterus.

It is found in the mitochondrion. The enzyme catalyses L-threonylcarbamoyladenylate + adenosine(37) in tRNA = N(6)-L-threonylcarbamoyladenosine(37) in tRNA + AMP + H(+). Required for the formation of a threonylcarbamoyl group on adenosine at position 37 (t(6)A37) in mitochondrial tRNAs that read codons beginning with adenine. Probably involved in the transfer of the threonylcarbamoyl moiety of threonylcarbamoyl-AMP (TC-AMP) to the N6 group of A37. Involved in mitochondrial genome maintenance. The chain is tRNA N6-adenosine threonylcarbamoyltransferase, mitochondrial from Homo sapiens (Human).